A 496-amino-acid chain; its full sequence is Cytochrome P450 71D180 (496 aa).

A helical; Signal-anchor for type II membrane protein transmembrane segment spans residues 1 to 21; sequence MDISISWVVIIVFVLSYLILM. Cysteine 435 serves as a coordination point for heme. The interval 471-496 is disordered; the sequence is MSETPGLSGPRKNPLIMIPTIHNPTS.

The protein belongs to the cytochrome P450 family. Heme is required as a cofactor. In terms of tissue distribution, mostly expressed in flowers and stems, and, to a lower extent, in leaves.

Its subcellular location is the membrane. The enzyme catalyses gamma-terpinene + 2 reduced [NADPH--hemoprotein reductase] + 2 O2 = carvacrol + 2 oxidized [NADPH--hemoprotein reductase] + 3 H2O + 2 H(+). It catalyses the reaction (4S)-limonene + reduced [NADPH--hemoprotein reductase] + O2 = (1S,5R)-carveol + oxidized [NADPH--hemoprotein reductase] + H2O + H(+). The catalysed reaction is (4R)-limonene + reduced [NADPH--hemoprotein reductase] + O2 = (1R,5S)-carveol + oxidized [NADPH--hemoprotein reductase] + H2O + H(+). The protein operates within secondary metabolite biosynthesis; terpenoid biosynthesis. Involved in the biosynthesis of phenolic monoterpenes natural products thymol and carvacrol which have a broad range of biological activities acting as antimicrobial compounds, insecticides, antioxidants and pharmaceutical agents. Catalyzes the C2-hydroxylation of gamma-terpinene to produce carvacrol. Also mediates the C6-hydroxylation of (4S)-limonene and (4R)-limonene to form carveol. This Origanum vulgare (Wild marjoram) protein is Cytochrome P450 71D180.